The following is a 287-amino-acid chain: Pyridoxal 5'-phosphate synthase subunit PdxS (287 aa).

Residue D21 participates in D-ribose 5-phosphate binding. K78 acts as the Schiff-base intermediate with D-ribose 5-phosphate in catalysis. G150 is a D-ribose 5-phosphate binding site. R162 provides a ligand contact to D-glyceraldehyde 3-phosphate. D-ribose 5-phosphate contacts are provided by residues G211 and 232–233 (GS).

Belongs to the PdxS/SNZ family. In the presence of PdxT, forms a dodecamer of heterodimers.

The enzyme catalyses aldehydo-D-ribose 5-phosphate + D-glyceraldehyde 3-phosphate + L-glutamine = pyridoxal 5'-phosphate + L-glutamate + phosphate + 3 H2O + H(+). It functions in the pathway cofactor biosynthesis; pyridoxal 5'-phosphate biosynthesis. Catalyzes the formation of pyridoxal 5'-phosphate from ribose 5-phosphate (RBP), glyceraldehyde 3-phosphate (G3P) and ammonia. The ammonia is provided by the PdxT subunit. Can also use ribulose 5-phosphate and dihydroxyacetone phosphate as substrates, resulting from enzyme-catalyzed isomerization of RBP and G3P, respectively. This chain is Pyridoxal 5'-phosphate synthase subunit PdxS, found in Tropheryma whipplei (strain TW08/27) (Whipple's bacillus).